A 131-amino-acid polypeptide reads, in one-letter code: Small ribosomal subunit protein uS8 (131 aa).

The protein belongs to the universal ribosomal protein uS8 family. As to quaternary structure, part of the 30S ribosomal subunit. Contacts proteins S5 and S12.

Its function is as follows. One of the primary rRNA binding proteins, it binds directly to 16S rRNA central domain where it helps coordinate assembly of the platform of the 30S subunit. This Pelagibacter ubique (strain HTCC1062) protein is Small ribosomal subunit protein uS8.